The primary structure comprises 248 residues: Proteasome subunit alpha type-7 (248 aa).

The O-linked (GlcNAc) serine glycan is linked to S130. Y153 bears the Phosphotyrosine; by ABL1 and ABL2 mark. At K227 the chain carries N6-acetyllysine.

Belongs to the peptidase T1A family. The 26S proteasome consists of a 20S proteasome core and two 19S regulatory subunits. The 20S proteasome core is a barrel-shaped complex made of 28 subunits that are arranged in four stacked rings. The two outer rings are each formed by seven alpha subunits, and the two inner rings are formed by seven beta subunits. The proteolytic activity is exerted by three beta-subunits PSMB5, PSMB6 and PSMB7. PSMA7 interacts directly with the PSMG1-PSMG2 heterodimer which promotes 20S proteasome assembly. Interacts with HIF1A. Interacts with RAB7A. Interacts with PRKN. Interacts with ABL1 and ABL2. Interacts with EMAP2. Interacts with MAVS. In terms of processing, phosphorylation by ABL1 or ABL2 leads to an inhibition of proteasomal activity and cell cycle transition blocks. Detected in liver (at protein level).

It localises to the cytoplasm. The protein localises to the nucleus. Functionally, component of the 20S core proteasome complex involved in the proteolytic degradation of most intracellular proteins. This complex plays numerous essential roles within the cell by associating with different regulatory particles. Associated with two 19S regulatory particles, forms the 26S proteasome and thus participates in the ATP-dependent degradation of ubiquitinated proteins. The 26S proteasome plays a key role in the maintenance of protein homeostasis by removing misfolded or damaged proteins that could impair cellular functions, and by removing proteins whose functions are no longer required. Associated with the PA200 or PA28, the 20S proteasome mediates ubiquitin-independent protein degradation. This type of proteolysis is required in several pathways including spermatogenesis (20S-PA200 complex) or generation of a subset of MHC class I-presented antigenic peptides (20S-PA28 complex). This chain is Proteasome subunit alpha type-7 (Psma7), found in Mus musculus (Mouse).